Reading from the N-terminus, the 369-residue chain is Methylthioribose-1-phosphate isomerase (369 aa).

Residue Met1 is modified to N-acetylmethionine. Residue Arg158 is modified to Omega-N-methylarginine. The active-site Proton donor is Asp248. The residue at position 366 (Ser366) is a Phosphoserine.

Belongs to the eIF-2B alpha/beta/delta subunits family. MtnA subfamily.

The protein resides in the cytoplasm. The protein localises to the nucleus. It carries out the reaction 5-(methylsulfanyl)-alpha-D-ribose 1-phosphate = 5-(methylsulfanyl)-D-ribulose 1-phosphate. It participates in amino-acid biosynthesis; L-methionine biosynthesis via salvage pathway; L-methionine from S-methyl-5-thio-alpha-D-ribose 1-phosphate: step 1/6. Catalyzes the interconversion of methylthioribose-1-phosphate (MTR-1-P) into methylthioribulose-1-phosphate (MTRu-1-P). This Rattus norvegicus (Rat) protein is Methylthioribose-1-phosphate isomerase (Mri1).